The following is an 877-amino-acid chain: Alanine--tRNA ligase (877 aa).

Zn(2+)-binding residues include histidine 567, histidine 571, cysteine 669, and histidine 673.

This sequence belongs to the class-II aminoacyl-tRNA synthetase family. Requires Zn(2+) as cofactor.

The protein resides in the cytoplasm. It carries out the reaction tRNA(Ala) + L-alanine + ATP = L-alanyl-tRNA(Ala) + AMP + diphosphate. In terms of biological role, catalyzes the attachment of alanine to tRNA(Ala) in a two-step reaction: alanine is first activated by ATP to form Ala-AMP and then transferred to the acceptor end of tRNA(Ala). Also edits incorrectly charged Ser-tRNA(Ala) and Gly-tRNA(Ala) via its editing domain. This chain is Alanine--tRNA ligase, found in Rickettsia prowazekii (strain Madrid E).